A 647-amino-acid chain; its full sequence is Pre-mRNA-splicing factor SLU7 (647 aa).

Residues 1-19 (MASYKQNLPPSALIKQQVN) are compositionally biased toward polar residues. The disordered stretch occupies residues 1–44 (MASYKQNLPPSALIKQQVNVADKKSKAEVQRDRQLEEDRKAGTA). The span at 21-41 (ADKKSKAEVQRDRQLEEDRKA) shows a compositional bias: basic and acidic residues. The CCHC-type zinc-finger motif lies at 113-130 (GACENCGAMGHQKRDCFD). Disordered stretches follow at residues 193 to 212 (HEMK…APKD) and 465 to 620 (EVKE…KEME). Basic and acidic residues predominate over residues 465-479 (EVKEEKEKEDSIKDE). Residues 480–491 (VAEENSDNDNDE) are compositionally biased toward acidic residues. A compositionally biased stretch (basic and acidic residues) spans 513–533 (EKEREKERLIEKERRERDQRR). Positions 534–555 (RDKKREKRERKKAKLGKRKRRH) are enriched in basic residues. Over residues 588 to 606 (EKAEGMKAAREGDRGRKYN) the composition is skewed to basic and acidic residues.

The protein belongs to the SLU7 family.

The protein resides in the nucleus. Its function is as follows. Participates in the second catalytic step of pre-mRNA splicing, when the free hydroxyl group of exon I attacks the 3'-splice site to generate spliced mRNA and the excised lariat intron. The chain is Pre-mRNA-splicing factor SLU7 from Caenorhabditis elegans.